The following is a 91-amino-acid chain: Small ribosomal subunit protein uS19 (91 aa).

This sequence belongs to the universal ribosomal protein uS19 family.

In terms of biological role, protein S19 forms a complex with S13 that binds strongly to the 16S ribosomal RNA. This is Small ribosomal subunit protein uS19 from Marinomonas sp. (strain MWYL1).